Consider the following 486-residue polypeptide: 3-sulfolactaldehyde dehydrogenase (486 aa).

Residues 157-158 (WN), 181-184 (RPAS), and 234-235 (GS) contribute to the NADP(+) site. Glu256 acts as the Proton acceptor in catalysis. Residue Leu257 coordinates NADP(+). Cys290 functions as the Nucleophile in the catalytic mechanism. Position 387 (Glu387) interacts with NADP(+).

It belongs to the aldehyde dehydrogenase family.

The enzyme catalyses (2S)-3-sulfolactaldehyde + NADP(+) + H2O = (2S)-3-sulfolactate + NADPH + 2 H(+). It catalyses the reaction (2S)-3-sulfolactaldehyde + NAD(+) + H2O = (2S)-3-sulfolactate + NADH + 2 H(+). Functionally, catalyzes the oxidation of (2S)-3-sulfolactaldehyde to (2S)-3-sulfolactate, using both NAD(+) and NADP(+) as electron acceptors. Is involved in a degradation pathway of sulfoquinovose (SQ) that allows P.putida SQ1 to use SQ as the sole carbon and energy source for growth. The sequence is that of 3-sulfolactaldehyde dehydrogenase from Pseudomonas putida (Arthrobacter siderocapsulatus).